The chain runs to 374 residues: Queuine tRNA-ribosyltransferase (374 aa).

Catalysis depends on Asp-89, which acts as the Proton acceptor. Substrate is bound by residues 89–93, Asp-143, Gln-187, and Gly-214; that span reads DSGGF. Residues 245–251 form an RNA binding region; the sequence is GVGKPED. Asp-264 acts as the Nucleophile in catalysis. The tract at residues 269–273 is RNA binding; important for wobble base 34 recognition; it reads TRNAR. The Zn(2+) site is built by Cys-302, Cys-304, Cys-307, and His-333.

This sequence belongs to the queuine tRNA-ribosyltransferase family. In terms of assembly, homodimer. Within each dimer, one monomer is responsible for RNA recognition and catalysis, while the other monomer binds to the replacement base PreQ1. It depends on Zn(2+) as a cofactor.

It carries out the reaction 7-aminomethyl-7-carbaguanine + guanosine(34) in tRNA = 7-aminomethyl-7-carbaguanosine(34) in tRNA + guanine. It functions in the pathway tRNA modification; tRNA-queuosine biosynthesis. Catalyzes the base-exchange of a guanine (G) residue with the queuine precursor 7-aminomethyl-7-deazaguanine (PreQ1) at position 34 (anticodon wobble position) in tRNAs with GU(N) anticodons (tRNA-Asp, -Asn, -His and -Tyr). Catalysis occurs through a double-displacement mechanism. The nucleophile active site attacks the C1' of nucleotide 34 to detach the guanine base from the RNA, forming a covalent enzyme-RNA intermediate. The proton acceptor active site deprotonates the incoming PreQ1, allowing a nucleophilic attack on the C1' of the ribose to form the product. After dissociation, two additional enzymatic reactions on the tRNA convert PreQ1 to queuine (Q), resulting in the hypermodified nucleoside queuosine (7-(((4,5-cis-dihydroxy-2-cyclopenten-1-yl)amino)methyl)-7-deazaguanosine). The protein is Queuine tRNA-ribosyltransferase of Serratia proteamaculans (strain 568).